Reading from the N-terminus, the 615-residue chain is Sodium-dependent dopamine transporter (615 aa).

The interval 1–39 (MQLVPTDDPDEKIGRTSNGMQNATLPIDGPVNTEPKDPA) is disordered. At 1–46 (MQLVPTDDPDEKIGRTSNGMQNATLPIDGPVNTEPKDPAREQWSGK) the chain is on the cytoplasmic side. Residues 15 to 24 (RTSNGMQNAT) show a composition bias toward polar residues. A helical membrane pass occupies residues 47-72 (LDFLLSVVGFAVDLGNIWRFPYLCFK). Residues glycine 55, alanine 57, valine 58, and asparagine 62 each contribute to the Na(+) site. The Extracellular portion of the chain corresponds to 73–76 (NGGG). Residues 77 to 100 (VFLIPYSIMVLLTGVPLFYMELCL) traverse the membrane as a helical segment. Topologically, residues 101-120 (GQYYRKGAITTWGRICPLFK) are cytoplasmic. The helical transmembrane segment at 121–151 (GIGYCVILTAFYVDFFYNVILAWGLHYLYTS) threads the bilayer. The Extracellular portion of the chain corresponds to 152-229 (FSFNLPWASC…IRSVTDLGNV (78 aa)). A disulfide bridge connects residues cysteine 161 and cysteine 170. Residues asparagine 162 and asparagine 187 are each glycosylated (N-linked (GlcNAc...) asparagine). Residues 230–250 (RWDIALSLFVVYLICYFSMWK) traverse the membrane as a helical segment. Residues 251 to 253 (GIH) are Cytoplasmic-facing. A helical membrane pass occupies residues 254-278 (TSGKVVWFTALFPYVVLGILFIRGV). Residues 279-302 (TLPGWQNGIEYYLRPNFEMLKRPS) are Extracellular-facing. A helical transmembrane segment spans residues 303–328 (VWQDAATQVFFSLGPGFGVLMAYSSY). Serine 314 lines the Na(+) pocket. Residues 329-334 (NDFHNN) are Cytoplasmic-facing. A helical transmembrane segment spans residues 335 to 358 (VYVDALFTSFINCATSFLSGFVIF). Asparagine 346 is a Na(+) binding site. Residues 359 to 398 (SVLGYMSCKSGKPIEAVAQEGPGLVFVVYPEALSTMPYAP) lie on the Extracellular side of the membrane. Residues 399 to 424 (FWSVLFFLMLMTLGLDSSFGGSEAII) traverse the membrane as a helical segment. Leucine 411, aspartate 414, and serine 415 together coordinate Na(+). Residues 425 to 439 (TGLSDEFPILKKNRE) lie on the Cytoplasmic side of the membrane. Residues 440–460 (VFVGCLFAFYMVIGIAMCTEG) traverse the membrane as a helical segment. Residue glycine 461 is a topological domain, extracellular. A helical membrane pass occupies residues 462 to 488 (ILIMEWLIIYGTTWGLLIAVFCEAMVI). Residues 489-518 (AYIYGLRQFVHDVKEMMGFRPGNYWKFCWS) are Cytoplasmic-facing. A helical transmembrane segment spans residues 519–541 (CAAPFILLSMITSNFINYQALTY). The Extracellular segment spans residues 542-544 (QDY). A helical transmembrane segment spans residues 545–565 (TYPTAANVIGIIFALSGASFI). The Cytoplasmic portion of the chain corresponds to 566-615 (PLVGIYKFVNARGNTISEKWQRVTMPYRKRPNQTEYIPIPTTQPHSDIML).

It belongs to the sodium:neurotransmitter symporter (SNF) (TC 2.A.22) family.

It is found in the cell membrane. In terms of biological role, dopamine transporter. Terminates the action of dopamine by its high affinity sodium-dependent reuptake into presynaptic terminals. Plays a role in the learned avoidance behavior of animals exposed to food that induces mitochondrial stress. In Caenorhabditis elegans, this protein is Sodium-dependent dopamine transporter.